The following is a 392-amino-acid chain: Cytochrome b (392 aa).

A run of 4 helical transmembrane segments spans residues 38 to 58 (FGSLAGICLVIQIVTGVFLAM), 82 to 104 (WLLRYMHANGASMFLIVVHLHIF), 119 to 139 (VRCLGVVIFLLMIVTAFTGYV), and 185 to 205 (FFSLHHLLPFILVGASLLHLA). Residues His88 and His102 each coordinate heme b. Heme b contacts are provided by His189 and His203. His208 is an a ubiquinone binding site. 4 helical membrane-spanning segments follow: residues 231–251 (FYVKDLVGWVAFAIFFSIWIF), 295–315 (SGGVAAIAPVFICLLALPFFK), 327–347 (IHQGIFWLLLADRLLLGWIGC), and 354–373 (FVTIGQIPPFVFFLFFAITP).

Belongs to the cytochrome b family. As to quaternary structure, the main subunits of complex b-c1 are: cytochrome b, cytochrome c1 and the Rieske protein. The cofactor is heme b.

Its subcellular location is the mitochondrion inner membrane. Component of the ubiquinol-cytochrome c reductase complex (complex III or cytochrome b-c1 complex) that is part of the mitochondrial respiratory chain. The b-c1 complex mediates electron transfer from ubiquinol to cytochrome c. Contributes to the generation of a proton gradient across the mitochondrial membrane that is then used for ATP synthesis. The sequence is that of Cytochrome b (MT-CYB) from Pisum sativum (Garden pea).